Consider the following 99-residue polypeptide: Apolipoprotein C-III (99 aa).

The signal sequence occupies residues 1–20; that stretch reads MQPRTLLTVALLALLASARA. Met63 is subject to Methionine sulfoxide. The interval 68-99 is lipid-binding; it reads RFLKGYWSKFTDKFTGFWDSNPEDQPTPAIES. A glycan (O-linked (GalNAc...) threonine) is linked at Thr94.

This sequence belongs to the apolipoprotein C3 family. Post-translationally, the most abundant glycoforms are characterized by an O-linked disaccharide galactose linked to N-acetylgalactosamine (Gal-GalNAc), further modified with up to 3 sialic acid residues. Less abundant glycoforms are characterized by more complex and fucosylated glycan moieties. O-glycosylated on Thr-94 with a core 1 or possibly core 8 glycan.

Its subcellular location is the secreted. Component of triglyceride-rich very low density lipoproteins (VLDL) and high density lipoproteins (HDL) in plasma. Plays a multifaceted role in triglyceride homeostasis. Intracellularly, promotes hepatic very low density lipoprotein 1 (VLDL1) assembly and secretion; extracellularly, attenuates hydrolysis and clearance of triglyceride-rich lipoproteins (TRLs). Impairs the lipolysis of TRLs by inhibiting lipoprotein lipase and the hepatic uptake of TRLs by remnant receptors. Formed of several curved helices connected via semiflexible hinges, so that it can wrap tightly around the curved micelle surface and easily adapt to the different diameters of its natural binding partners. This is Apolipoprotein C-III (Apoc3) from Mus musculus (Mouse).